Here is a 398-residue protein sequence, read N- to C-terminus: DnaJ-like protein R260 (398 aa).

One can recognise a J domain in the interval 7 to 72 (DLYEILGLTP…EKRRVYDQYG (66 aa)). A CR-type zinc finger spans residues 118–202 (KKTVKVTITV…CKGAGINKSE (85 aa)). CXXCXGXG motif repeat units follow at residues 131–138 (CDDCDATG), 147–154 (CKVCRGKG), 173–180 (CHGCQGKK), and 190–197 (CPSCKGAG). The disordered stretch occupies residues 364–398 (LRQINTDPSDESQDRDSEESYGGHGRPEGVGCAQQ). Residues 371–382 (PSDESQDRDSEE) are compositionally biased toward acidic residues.

It depends on Zn(2+) as a cofactor.

This is DnaJ-like protein R260 from Acanthamoeba polyphaga mimivirus (APMV).